The following is a 357-amino-acid chain: Probable glutamine amidotransferase DUG3 (357 aa).

The For GATase activity role is filled by C2. The Glutamine amidotransferase type-2 domain occupies 2–260 (CRFLIFKGKQ…PGEYRVERLD (259 aa)).

This sequence belongs to the DUG3 family. As to quaternary structure, component of the GSH degradosomal complex composed of at least DUG1, DUG2 and DUG3.

It is found in the cytoplasm. Functionally, component of the GSH degradosomal complex involved in the degradation of glutathione (GSH) and other peptides containing a gamma-glu-X bond. The chain is Probable glutamine amidotransferase DUG3 (DUG3) from Saccharomyces cerevisiae (strain ATCC 204508 / S288c) (Baker's yeast).